Consider the following 167-residue polypeptide: Phosphopantetheine adenylyltransferase (167 aa).

Residue T10 coordinates substrate. ATP contacts are provided by residues 10-11 (TF) and H18. Substrate is bound by residues K42, L75, and R89. ATP-binding positions include 90–92 (GVR), E100, and 125–131 (YTYVASS).

This sequence belongs to the bacterial CoaD family. In terms of assembly, homohexamer. Mg(2+) is required as a cofactor.

Its subcellular location is the cytoplasm. The catalysed reaction is (R)-4'-phosphopantetheine + ATP + H(+) = 3'-dephospho-CoA + diphosphate. It functions in the pathway cofactor biosynthesis; coenzyme A biosynthesis; CoA from (R)-pantothenate: step 4/5. In terms of biological role, reversibly transfers an adenylyl group from ATP to 4'-phosphopantetheine, yielding dephospho-CoA (dPCoA) and pyrophosphate. The chain is Phosphopantetheine adenylyltransferase from Chlorobium phaeobacteroides (strain DSM 266 / SMG 266 / 2430).